Here is a 174-residue protein sequence, read N- to C-terminus: ATP-dependent protease subunit HslV (174 aa).

The active site involves Thr-2. Gly-159, Asp-162, and Thr-165 together coordinate Na(+).

It belongs to the peptidase T1B family. HslV subfamily. As to quaternary structure, a double ring-shaped homohexamer of HslV is capped on each side by a ring-shaped HslU homohexamer. The assembly of the HslU/HslV complex is dependent on binding of ATP.

The protein resides in the cytoplasm. The catalysed reaction is ATP-dependent cleavage of peptide bonds with broad specificity.. With respect to regulation, allosterically activated by HslU binding. In terms of biological role, protease subunit of a proteasome-like degradation complex believed to be a general protein degrading machinery. The chain is ATP-dependent protease subunit HslV from Lacticaseibacillus casei (strain BL23) (Lactobacillus casei).